Reading from the N-terminus, the 95-residue chain is Aspartyl/glutamyl-tRNA(Asn/Gln) amidotransferase subunit C (95 aa).

This sequence belongs to the GatC family. In terms of assembly, heterotrimer of A, B and C subunits.

The catalysed reaction is L-glutamyl-tRNA(Gln) + L-glutamine + ATP + H2O = L-glutaminyl-tRNA(Gln) + L-glutamate + ADP + phosphate + H(+). The enzyme catalyses L-aspartyl-tRNA(Asn) + L-glutamine + ATP + H2O = L-asparaginyl-tRNA(Asn) + L-glutamate + ADP + phosphate + 2 H(+). Allows the formation of correctly charged Asn-tRNA(Asn) or Gln-tRNA(Gln) through the transamidation of misacylated Asp-tRNA(Asn) or Glu-tRNA(Gln) in organisms which lack either or both of asparaginyl-tRNA or glutaminyl-tRNA synthetases. The reaction takes place in the presence of glutamine and ATP through an activated phospho-Asp-tRNA(Asn) or phospho-Glu-tRNA(Gln). The polypeptide is Aspartyl/glutamyl-tRNA(Asn/Gln) amidotransferase subunit C (Rhizobium johnstonii (strain DSM 114642 / LMG 32736 / 3841) (Rhizobium leguminosarum bv. viciae)).